The chain runs to 672 residues: Acetyl-coenzyme A synthetase (672 aa).

CoA-binding positions include 205 to 208 (RGGK) and Thr-325. Residues 401–403 (GEP), 425–430 (DTYWQT), Asp-516, and Arg-531 each bind ATP. Residue Ser-539 participates in CoA binding. Arg-542 provides a ligand contact to ATP. Arg-600 is a binding site for CoA.

This sequence belongs to the ATP-dependent AMP-binding enzyme family.

The catalysed reaction is acetate + ATP + CoA = acetyl-CoA + AMP + diphosphate. The sequence is that of Acetyl-coenzyme A synthetase (facA) from Phycomyces blakesleeanus (strain ATCC 8743b / DSM 1359 / FGSC 10004 / NBRC 33097 / NRRL 1555).